The following is a 79-amino-acid chain: Large ribosomal subunit protein uL22 (79 aa).

The protein belongs to the universal ribosomal protein uL22 family. In terms of assembly, part of the 50S ribosomal subunit.

This protein binds specifically to 23S rRNA; its binding is stimulated by other ribosomal proteins, e.g. L4, L17, and L20. It is important during the early stages of 50S assembly. It makes multiple contacts with different domains of the 23S rRNA in the assembled 50S subunit and ribosome. Its function is as follows. The globular domain of the protein is located near the polypeptide exit tunnel on the outside of the subunit, while an extended beta-hairpin is found that lines the wall of the exit tunnel in the center of the 70S ribosome. The protein is Large ribosomal subunit protein uL22 (rplV) of Prunus armeniaca phytoplasma.